Reading from the N-terminus, the 100-residue chain is Integration host factor subunit alpha (100 aa).

This sequence belongs to the bacterial histone-like protein family. As to quaternary structure, heterodimer of an alpha and a beta chain.

Functionally, this protein is one of the two subunits of integration host factor, a specific DNA-binding protein that functions in genetic recombination as well as in transcriptional and translational control. The sequence is that of Integration host factor subunit alpha from Erythrobacter litoralis (strain HTCC2594).